Here is a 104-residue protein sequence, read N- to C-terminus: UPF0145 protein NP_2600A (104 aa).

The protein belongs to the UPF0145 family.

This Natronomonas pharaonis (strain ATCC 35678 / DSM 2160 / CIP 103997 / JCM 8858 / NBRC 14720 / NCIMB 2260 / Gabara) (Halobacterium pharaonis) protein is UPF0145 protein NP_2600A.